The chain runs to 121 residues: Small ribosomal subunit protein uS13 (121 aa).

Residues 91–121 (HRKGLPMRGQRTRTNARTRKGPRKAGVALKK) are disordered.

This sequence belongs to the universal ribosomal protein uS13 family. In terms of assembly, part of the 30S ribosomal subunit. Forms a loose heterodimer with protein S19. Forms two bridges to the 50S subunit in the 70S ribosome.

In terms of biological role, located at the top of the head of the 30S subunit, it contacts several helices of the 16S rRNA. In the 70S ribosome it contacts the 23S rRNA (bridge B1a) and protein L5 of the 50S subunit (bridge B1b), connecting the 2 subunits; these bridges are implicated in subunit movement. Contacts the tRNAs in the A and P-sites. This chain is Small ribosomal subunit protein uS13, found in Cupriavidus necator (strain ATCC 17699 / DSM 428 / KCTC 22496 / NCIMB 10442 / H16 / Stanier 337) (Ralstonia eutropha).